Consider the following 752-residue polypeptide: Cation-transporting P-type ATPase B (752 aa).

The HMA domain occupies 15–78 (RRIRLDVSGM…VVEKAGYHAA (64 aa)). 2 residues coordinate a metal cation: Cys26 and Cys29. A run of 6 helical transmembrane segments spans residues 105-125 (LLVA…FAIV), 132-152 (GWGY…AWPF), 167-187 (METL…SSVF), 201-221 (AILN…VFVL), 361-381 (IAGV…AAWL), and 390-410 (AFSV…GLAT). Asp446 (4-aspartylphosphate intermediate) is an active-site residue. The helical transmembrane segment at 714–734 (AIPIAAAGLLNPLIAGAAMAF) threads the bilayer.

The protein belongs to the cation transport ATPase (P-type) (TC 3.A.3) family. Type IB subfamily.

It is found in the cell membrane. The enzyme catalyses ATP + H2O = ADP + phosphate + H(+). The sequence is that of Cation-transporting P-type ATPase B (ctpB) from Mycobacterium bovis (strain ATCC BAA-935 / AF2122/97).